The primary structure comprises 149 residues: Transcription antitermination protein NusB (149 aa).

It belongs to the NusB family.

In terms of biological role, involved in transcription antitermination. Required for transcription of ribosomal RNA (rRNA) genes. Binds specifically to the boxA antiterminator sequence of the ribosomal RNA (rrn) operons. This Acinetobacter baylyi (strain ATCC 33305 / BD413 / ADP1) protein is Transcription antitermination protein NusB.